Reading from the N-terminus, the 792-residue chain is Zinc finger protein 606 (792 aa).

The 72-residue stretch at 62 to 133 (VTFKDVAVDF…EQACPQRTCP (72 aa)) folds into the KRAB domain. The segment at 289–311 (FKCTDAVKSFNHIIHFGDHKGIH) adopts a C2H2-type 1; degenerate zinc-finger fold. The C2H2-type 2; degenerate zinc finger occupies 317 to 344 (YEYKECHQIFNQSPSFNEHPRLHVGENQ). Residues 400 to 422 (YDYNECGTSFIWSSYLIQHKKTH) form a C2H2-type 3; degenerate zinc finger. 13 consecutive C2H2-type zinc fingers follow at residues 428–450 (YECD…ERTH), 456–478 (YECN…KRIH), 484–506 (YVCN…QRTH), 512–534 (FECT…MRMH), 540–562 (FKCD…ERTH), 568–590 (YKCT…QRTH), 596–618 (YNCQ…EIIH), 624–646 (YECN…QRTH), 652–674 (YECN…RRIH), 680–702 (YKCN…RRTH), 708–730 (YRCN…LRNH), 736–758 (YKCN…QRMH), and 764–786 (FICS…QRNH).

It belongs to the krueppel C2H2-type zinc-finger protein family. As to expression, widely expressed in adult and fetal tissues.

It is found in the nucleus. In terms of biological role, may act as a transcriptional repressor. The sequence is that of Zinc finger protein 606 (ZNF606) from Homo sapiens (Human).